A 613-amino-acid chain; its full sequence is DNA polymerase II small subunit (613 aa).

Belongs to the DNA polymerase delta/II small subunit family. Heterodimer of a large subunit and a small subunit.

It catalyses the reaction DNA(n) + a 2'-deoxyribonucleoside 5'-triphosphate = DNA(n+1) + diphosphate. The enzyme catalyses Exonucleolytic cleavage in the 3'- to 5'-direction to yield nucleoside 5'-phosphates.. Possesses two activities: a DNA synthesis (polymerase) and an exonucleolytic activity that degrades single-stranded DNA in the 3' to 5' direction. Has a template-primer preference which is characteristic of a replicative DNA polymerase. The polypeptide is DNA polymerase II small subunit (polB) (Pyrococcus furiosus (strain ATCC 43587 / DSM 3638 / JCM 8422 / Vc1)).